The following is a 237-amino-acid chain: Ribosomal RNA small subunit methyltransferase G (237 aa).

Residues G78, F83, 129–130 (AE), and R148 each bind S-adenosyl-L-methionine.

This sequence belongs to the methyltransferase superfamily. RNA methyltransferase RsmG family.

The protein localises to the cytoplasm. Functionally, specifically methylates the N7 position of a guanine in 16S rRNA. In Streptococcus pyogenes serotype M3 (strain ATCC BAA-595 / MGAS315), this protein is Ribosomal RNA small subunit methyltransferase G.